We begin with the raw amino-acid sequence, 469 residues long: MNPNQKIITIGSVSLTIATVCFLMQIAILVTTVTLHFKQHECDSPASNQVMPCEPIIIERNITEIVYLNNTTIEKEICPEVVEYRNWSKPQCQITGFAPFSKDNSIRLSAGGDIWVTREPYVSCDPGKCYQFALGQGTTLDNKHSNDTIHDRIPHRTLLMNELGVPFHLGTRQVCVAWSSSSCHDGKAWLHVCVTGDDKNATASFIYDGRLMDSIGSWSQNILRTQESECVCINGTCTVVMTDGSASGRADTRILFIEEGKIVHISPLSGSAQHVEECSCYPRYPDVRCICRDNWKGSNRPVIDINMEDYSIDSSYVCSGLVGDTPRNDDRSSNSNCRNPNNERGNPGVKGWAFDNGDDVWMGRTISKDLRSGYETFKVIGGWSTPNSKSQINRQVIVDSNNWSGYSGIFSVEGKRCINRCFYVELIRGRQQETRVWWTSNSIVVFCGTSGTYGTGSWPDGANINFMPI.

Residues 1-9 (MNPNQKIIT) are Intravirion-facing. Residues 10–30 (IGSVSLTIATVCFLMQIAILV) form a helical membrane-spanning segment. The interval 11 to 33 (GSVSLTIATVCFLMQIAILVTTV) is involved in apical transport and lipid raft association. Topologically, residues 31-469 (TTVTLHFKQH…DGANINFMPI (439 aa)) are virion surface. Positions 36-88 (HFKQHECDSPASNQVMPCEPIIIERNITEIVYLNNTTIEKEICPEVVEYRNWS) are hypervariable stalk region. Asn-61, Asn-69, Asn-70, and Asn-86 each carry an N-linked (GlcNAc...) asparagine; by host glycan. Residues 91 to 469 (QCQITGFAPF…DGANINFMPI (379 aa)) are head of neuraminidase. 8 disulfide bridges follow: Cys-92–Cys-417, Cys-124–Cys-129, Cys-183–Cys-230, Cys-232–Cys-237, Cys-278–Cys-291, Cys-280–Cys-289, Cys-318–Cys-337, and Cys-421–Cys-447. Arg-118 contacts substrate. Asn-146 carries an N-linked (GlcNAc...) asparagine; by host glycan. The Proton donor/acceptor role is filled by Asp-151. Arg-152 contributes to the substrate binding site. 2 N-linked (GlcNAc...) asparagine; by host glycosylation sites follow: Asn-200 and Asn-234. 276–277 (EE) is a substrate binding site. Arg-292 provides a ligand contact to substrate. 3 residues coordinate Ca(2+): Asp-293, Gly-297, and Asp-324. The segment at 324 to 350 (DTPRNDDRSSNSNCRNPNNERGNPGVK) is disordered. The span at 333-347 (SNSNCRNPNNERGNP) shows a compositional bias: low complexity. Arg-371 provides a ligand contact to substrate. Asn-402 carries N-linked (GlcNAc...) asparagine; by host glycosylation. Tyr-406 acts as the Nucleophile in catalysis.

Belongs to the glycosyl hydrolase 34 family. Homotetramer. Requires Ca(2+) as cofactor. In terms of processing, N-glycosylated.

It localises to the virion membrane. The protein localises to the host apical cell membrane. It catalyses the reaction Hydrolysis of alpha-(2-&gt;3)-, alpha-(2-&gt;6)-, alpha-(2-&gt;8)- glycosidic linkages of terminal sialic acid residues in oligosaccharides, glycoproteins, glycolipids, colominic acid and synthetic substrates.. Inhibited by the neuraminidase inhibitors zanamivir (Relenza) and oseltamivir (Tamiflu). These drugs interfere with the release of progeny virus from infected cells and are effective against all influenza strains. Resistance to neuraminidase inhibitors is quite rare. Catalyzes the removal of terminal sialic acid residues from viral and cellular glycoconjugates. Cleaves off the terminal sialic acids on the glycosylated HA during virus budding to facilitate virus release. Additionally helps virus spread through the circulation by further removing sialic acids from the cell surface. These cleavages prevent self-aggregation and ensure the efficient spread of the progeny virus from cell to cell. Otherwise, infection would be limited to one round of replication. Described as a receptor-destroying enzyme because it cleaves a terminal sialic acid from the cellular receptors. May facilitate viral invasion of the upper airways by cleaving the sialic acid moieties on the mucin of the airway epithelial cells. Likely to plays a role in the budding process through its association with lipid rafts during intracellular transport. May additionally display a raft-association independent effect on budding. Plays a role in the determination of host range restriction on replication and virulence. Sialidase activity in late endosome/lysosome traffic seems to enhance virus replication. The chain is Neuraminidase from Aves (Human).